The primary structure comprises 811 residues: Endothelin-converting enzyme 2 (811 aa).

Residues 1–106 are Cytoplasmic-facing; the sequence is MNVALQELGA…QLLGSRTQLE (106 aa). Positions 22 to 64 are disordered; that stretch reads LRDEDAPETPVEGGASPDAMEVGKGASPFSPGPSPGMTPGTPR. Residues 107-127 traverse the membrane as a helical; Signal-anchor for type II membrane protein segment; the sequence is LVLAGASLLLAALLLGCLVAL. The Lumenal portion of the chain corresponds to 128–811; the sequence is GVQYHRDPSH…MNPGQLCEVW (684 aa). In terms of domain architecture, Peptidase M13 spans 139 to 811; sequence TCLTEACIRV…MNPGQLCEVW (673 aa). Cystine bridges form between Cys-140-Cys-145, Cys-163-Cys-796, Cys-171-Cys-756, Cys-227-Cys-476, and Cys-685-Cys-808. N-linked (GlcNAc...) asparagine glycosylation is found at Asn-207, Asn-211, Asn-252, Asn-312, Asn-357, Asn-424, and Asn-580. A Zn(2+)-binding site is contributed by His-648. Glu-649 is an active-site residue. His-652 provides a ligand contact to Zn(2+). 2 N-linked (GlcNAc...) asparagine glycosylation sites follow: Asn-673 and Asn-681. A Zn(2+)-binding site is contributed by Glu-708. The Proton donor role is filled by Asp-712.

Belongs to the peptidase M13 family. The cofactor is Zn(2+).

It localises to the golgi apparatus membrane. Its subcellular location is the cytoplasmic vesicle. The protein resides in the secretory vesicle membrane. The catalysed reaction is Hydrolysis of the 21-Trp-|-Val-22 bond in big endothelin to form endothelin 1.. Functionally, converts big endothelin-1 to endothelin-1. Also involved in the processing of various neuroendocrine peptides, including neurotensin, angiotensin I, substance P, proenkephalin-derived peptides, and prodynorphin-derived peptides. May play a role in amyloid-beta processing. The polypeptide is Endothelin-converting enzyme 2 (Homo sapiens (Human)).